The chain runs to 165 residues: RNA pyrophosphohydrolase (165 aa).

The Nudix hydrolase domain occupies 13 to 154 (PYRQGVGIML…KRPVYEQVVA (142 aa)). The Nudix box motif lies at 46-67 (GGIDAGEDPETAAWREMEEEIG).

This sequence belongs to the Nudix hydrolase family. RppH subfamily. The cofactor is a divalent metal cation.

Its function is as follows. Accelerates the degradation of transcripts by removing pyrophosphate from the 5'-end of triphosphorylated RNA, leading to a more labile monophosphorylated state that can stimulate subsequent ribonuclease cleavage. This chain is RNA pyrophosphohydrolase, found in Rhodospirillum rubrum (strain ATCC 11170 / ATH 1.1.1 / DSM 467 / LMG 4362 / NCIMB 8255 / S1).